We begin with the raw amino-acid sequence, 123 residues long: Small ribosomal subunit protein uS12 (123 aa).

At D89 the chain carries 3-methylthioaspartic acid.

This sequence belongs to the universal ribosomal protein uS12 family. In terms of assembly, part of the 30S ribosomal subunit. Contacts proteins S8 and S17. May interact with IF1 in the 30S initiation complex.

In terms of biological role, with S4 and S5 plays an important role in translational accuracy. Functionally, interacts with and stabilizes bases of the 16S rRNA that are involved in tRNA selection in the A site and with the mRNA backbone. Located at the interface of the 30S and 50S subunits, it traverses the body of the 30S subunit contacting proteins on the other side and probably holding the rRNA structure together. The combined cluster of proteins S8, S12 and S17 appears to hold together the shoulder and platform of the 30S subunit. The chain is Small ribosomal subunit protein uS12 from Phenylobacterium zucineum (strain HLK1).